The sequence spans 425 residues: Serine--tRNA ligase (425 aa).

Residue 233–235 coordinates L-serine; that stretch reads TAE. 264–266 is a binding site for ATP; that stretch reads RAE. E287 is a binding site for L-serine. Position 351-354 (351-354) interacts with ATP; sequence EISS. S387 lines the L-serine pocket.

This sequence belongs to the class-II aminoacyl-tRNA synthetase family. Type-1 seryl-tRNA synthetase subfamily. In terms of assembly, homodimer. The tRNA molecule binds across the dimer.

It localises to the cytoplasm. It catalyses the reaction tRNA(Ser) + L-serine + ATP = L-seryl-tRNA(Ser) + AMP + diphosphate + H(+). The catalysed reaction is tRNA(Sec) + L-serine + ATP = L-seryl-tRNA(Sec) + AMP + diphosphate + H(+). It participates in aminoacyl-tRNA biosynthesis; selenocysteinyl-tRNA(Sec) biosynthesis; L-seryl-tRNA(Sec) from L-serine and tRNA(Sec): step 1/1. Catalyzes the attachment of serine to tRNA(Ser). Is also able to aminoacylate tRNA(Sec) with serine, to form the misacylated tRNA L-seryl-tRNA(Sec), which will be further converted into selenocysteinyl-tRNA(Sec). In Clostridium perfringens (strain 13 / Type A), this protein is Serine--tRNA ligase.